We begin with the raw amino-acid sequence, 384 residues long: 1-deoxy-D-xylulose 5-phosphate reductoisomerase (384 aa).

NADPH is bound by residues T10, G11, S12, I13, R37, N38, and N124. K125 lines the 1-deoxy-D-xylulose 5-phosphate pocket. Residue E126 participates in NADPH binding. A Mn(2+)-binding site is contributed by D150. S151, E152, S176, and H199 together coordinate 1-deoxy-D-xylulose 5-phosphate. A Mn(2+)-binding site is contributed by E152. G205 provides a ligand contact to NADPH. Positions 212, 217, 218, and 221 each coordinate 1-deoxy-D-xylulose 5-phosphate. A Mn(2+)-binding site is contributed by E221.

Belongs to the DXR family. Requires Mg(2+) as cofactor. Mn(2+) is required as a cofactor.

The catalysed reaction is 2-C-methyl-D-erythritol 4-phosphate + NADP(+) = 1-deoxy-D-xylulose 5-phosphate + NADPH + H(+). The protein operates within isoprenoid biosynthesis; isopentenyl diphosphate biosynthesis via DXP pathway; isopentenyl diphosphate from 1-deoxy-D-xylulose 5-phosphate: step 1/6. Its function is as follows. Catalyzes the NADPH-dependent rearrangement and reduction of 1-deoxy-D-xylulose-5-phosphate (DXP) to 2-C-methyl-D-erythritol 4-phosphate (MEP). The chain is 1-deoxy-D-xylulose 5-phosphate reductoisomerase from Clostridium perfringens (strain 13 / Type A).